The following is a 235-amino-acid chain: Aspartate/glutamate leucyltransferase (235 aa).

This sequence belongs to the R-transferase family. Bpt subfamily.

It is found in the cytoplasm. The catalysed reaction is N-terminal L-glutamyl-[protein] + L-leucyl-tRNA(Leu) = N-terminal L-leucyl-L-glutamyl-[protein] + tRNA(Leu) + H(+). It carries out the reaction N-terminal L-aspartyl-[protein] + L-leucyl-tRNA(Leu) = N-terminal L-leucyl-L-aspartyl-[protein] + tRNA(Leu) + H(+). Functionally, functions in the N-end rule pathway of protein degradation where it conjugates Leu from its aminoacyl-tRNA to the N-termini of proteins containing an N-terminal aspartate or glutamate. The sequence is that of Aspartate/glutamate leucyltransferase from Pseudomonas putida (strain W619).